Here is an 824-residue protein sequence, read N- to C-terminus: Spindle-defective protein 2 (824 aa).

Acidic residues-rich tracts occupy residues 16–27 (EIEDSPIDDNDN) and 35–44 (GDVELEEEEV). Residues 16–98 (EIEDSPIDDN…SRPASVMSDK (83 aa)) are disordered. Residues 59–70 (TNMTNPKVNDLT) show a composition bias toward polar residues. The segment covering 81-98 (SAASSRSASRPASVMSDK) has biased composition (low complexity). A coiled-coil region spans residues 111 to 131 (ENAIEEYTNQVFADENKADLL). Residues 189–252 (RAKPGANDNE…GQYQGPNFDL (64 aa)) are disordered. Positions 207-225 (NVPTTSDKSAFITSPMNST) are enriched in polar residues. Residues 304–324 (NNKNQDLFAALEEARKRRAAQ) adopt a coiled-coil conformation. 2 disordered regions span residues 342-372 (KPTS…LTTS) and 433-455 (NNGN…VRTM). Over residues 349 to 366 (SGNVVSSTSNDNTTAASS) the composition is skewed to low complexity.

Interacts with sas-7 (via C-terminus); may be recruited to centrioles by sas-7.

It localises to the cytoplasm. The protein localises to the cytoskeleton. It is found in the microtubule organizing center. Its subcellular location is the centrosome. The protein resides in the centriole. Required both for centrosome duplication and maturation. Required for pericentriolar material (PCM) recruitment. The chain is Spindle-defective protein 2 from Caenorhabditis elegans.